The chain runs to 299 residues: Sulfotransferase 1B1 (299 aa).

48–53 (KSGTTW) lines the 3'-phosphoadenylyl sulfate pocket. 107-109 (KTH) lines the substrate pocket. His109 acts as the Proton acceptor in catalysis. 3'-phosphoadenylyl sulfate is bound by residues Arg131, Ser139, Tyr194, 228-233 (TSFEMM), and 258-260 (RKG).

This sequence belongs to the sulfotransferase 1 family. In terms of tissue distribution, liver specific.

Its subcellular location is the cytoplasm. The enzyme catalyses a phenol + 3'-phosphoadenylyl sulfate = an aryl sulfate + adenosine 3',5'-bisphosphate + H(+). The catalysed reaction is 3,3',5-triiodo-L-thyronine + 3'-phosphoadenylyl sulfate = 3,3',5-triiodo-L-thyronine sulfate + adenosine 3',5'-bisphosphate + H(+). It carries out the reaction 3,3',5'-triiodo-L-thyronine + 3'-phosphoadenylyl sulfate = 3,3',5'-triiodo-L-thyronine sulfate + adenosine 3',5'-bisphosphate + H(+). It catalyses the reaction 3,3'-diiodo-L-thyronine + 3'-phosphoadenylyl sulfate = 3,3'-diiodo-L-thyronine sulfate + adenosine 3',5'-bisphosphate + H(+). The enzyme catalyses dopamine + 3'-phosphoadenylyl sulfate = dopamine 3-O-sulfate + adenosine 3',5'-bisphosphate + H(+). The catalysed reaction is dopamine + 3'-phosphoadenylyl sulfate = dopamine 4-O-sulfate + adenosine 3',5'-bisphosphate + H(+). It carries out the reaction 4-ethylphenol + 3'-phosphoadenylyl sulfate = 4-ethylphenyl sulfate + adenosine 3',5'-bisphosphate + H(+). In terms of biological role, sulfotransferase that utilizes 3'-phospho-5'-adenylyl sulfate (PAPS) as sulfonate donor to catalyze the sulfate conjugation of dopamine, small phenols such as 1-naphthol and p-nitrophenol and thyroid hormones, including 3,3'-diiodothyronine, triidothyronine (T3) and reverse triiodothyronine (rT3). May play a role in gut microbiota-host metabolic interaction. O-sulfonates 4-ethylphenol (4-EP), a dietary tyrosine-derived metabolite produced by gut bacteria. The product 4-EPS crosses the blood-brain barrier and may negatively regulate oligodendrocyte maturation and myelination, affecting the functional connectivity of different brain regions associated with the limbic system. In Mus musculus (Mouse), this protein is Sulfotransferase 1B1.